The primary structure comprises 255 residues: MEKCEGIVIRQTSYRESDKIVRMYTREFGKIGVVARGAKKTKSRLAAVTQLFTNGYFTFFGSNGLGTLQQGEVIENFSSIQQDIFMTAYATYVCELLDKATEERQPNPYLYELTFQILRDINEGYDPQILTQIFEMKMLPVLGLYPTMDKCAICGETTGHFDFSTSSNGIICHRCFEKDRYRMHLPENVVKLLRLFFIFQLDRLGNIDVKPETKEWLQKAIDTYYDEYSGLYLKSRKFLREMDKWENMLKKDSDD.

The protein belongs to the RecO family.

Its function is as follows. Involved in DNA repair and RecF pathway recombination. The sequence is that of DNA repair protein RecO from Listeria monocytogenes serotype 4b (strain CLIP80459).